Here is a 53-residue protein sequence, read N- to C-terminus: ATP synthase protein 8 (53 aa).

A helical transmembrane segment spans residues P6–M26.

It belongs to the ATPase protein 8 family. In terms of assembly, F-type ATPases have 2 components, CF(1) - the catalytic core - and CF(0) - the membrane proton channel.

It is found in the mitochondrion membrane. In terms of biological role, mitochondrial membrane ATP synthase (F(1)F(0) ATP synthase or Complex V) produces ATP from ADP in the presence of a proton gradient across the membrane which is generated by electron transport complexes of the respiratory chain. F-type ATPases consist of two structural domains, F(1) - containing the extramembraneous catalytic core and F(0) - containing the membrane proton channel, linked together by a central stalk and a peripheral stalk. During catalysis, ATP synthesis in the catalytic domain of F(1) is coupled via a rotary mechanism of the central stalk subunits to proton translocation. Part of the complex F(0) domain. Minor subunit located with subunit a in the membrane. In Ceratitis capitata (Mediterranean fruit fly), this protein is ATP synthase protein 8 (mt:ATPase8).